A 177-amino-acid polypeptide reads, in one-letter code: Adenine phosphoribosyltransferase (177 aa).

It belongs to the purine/pyrimidine phosphoribosyltransferase family. Homodimer.

The protein localises to the cytoplasm. It catalyses the reaction AMP + diphosphate = 5-phospho-alpha-D-ribose 1-diphosphate + adenine. The protein operates within purine metabolism; AMP biosynthesis via salvage pathway; AMP from adenine: step 1/1. Catalyzes a salvage reaction resulting in the formation of AMP, that is energically less costly than de novo synthesis. In Chlorobaculum parvum (strain DSM 263 / NCIMB 8327) (Chlorobium vibrioforme subsp. thiosulfatophilum), this protein is Adenine phosphoribosyltransferase.